We begin with the raw amino-acid sequence, 884 residues long: Schlafen family member 5 (884 aa).

574–581 provides a ligand contact to ATP; that stretch reads GLPGSGKT.

This sequence belongs to the Schlafen family. Subgroup III subfamily.

In terms of biological role, may have a role in hematopoietic cell differentiation. This Mus musculus (Mouse) protein is Schlafen family member 5 (Slfn5).